Here is a 1198-residue protein sequence, read N- to C-terminus: Tetratricopeptide repeat protein 17 (1198 aa).

A TPR 1 repeat occupies 295–328; the sequence is FTSYYTLGNIYAMLGEYNHSVLCYDHALQAKPGF. A coiled-coil region spans residues 340–382; that stretch reads CQQKLEQKLEAQHRSLQRTLNELKEYQKQHDHYLRQQEILEKH. TPR repeat units follow at residues 619–652 and 689–722; these read WLIL…APVQ and PLTF…STKC. 2 disordered regions span residues 774–793 and 902–954; these read LDAA…PVLS and VKKP…YQSL. A compositionally biased stretch (basic residues) spans 902–914; that stretch reads VKKPKGDHKKPPG. 3 TPR repeats span residues 1071–1105, 1108–1141, and 1142–1175; these read SWVL…APHQ, DVPL…APHF, and AVNH…QPEF.

This sequence belongs to the TTC17 family. In terms of assembly, interacts with CATIP.

It localises to the cytoplasm. Its subcellular location is the cell membrane. The protein localises to the cytoskeleton. Functionally, plays a role in primary ciliogenesis by modulating actin polymerization. The chain is Tetratricopeptide repeat protein 17 (Ttc17) from Mus musculus (Mouse).